The chain runs to 704 residues: Chloride intracellular channel protein 6 (704 aa).

Low complexity predominate over residues 1-13 (MAEAAEPEGVAPG). The segment at 1–446 (MAEAAEPEGV…EDGEASEPRA (446 aa)) is disordered. Positions 39–48 (EGPEGSEGAE) are enriched in acidic residues. Residue serine 44 is modified to Phosphoserine. Basic and acidic residues predominate over residues 67–83 (RGPEAEARGTRGAHGET). Positions 90–100 (PEGAEVPQGGE) are enriched in low complexity. Basic and acidic residues predominate over residues 121-147 (PRGEAQREPEDSAAPERQEEAEQRPEV). 13 consecutive repeat copies span residues 157–166 (GDSVDAEGPL), 167–176 (GDNIEAEGPA), 177–186 (GDSVEAEGRV), 187–196 (GDSVDAEGPA), 197–206 (GDSVDAEGPL), 207–216 (GDNIQAEGPA), 217–226 (GDSVDAEGRV), 227–236 (GDSVDAEGPA), 237–246 (GDSVDAEGRV), 247–256 (GDSVEAGDPA), 257–266 (GDGVEAGVPA), 267–276 (GDSVEAEGPA), and 277–286 (GDSMDAEGPA). Residues 157–282 (GDSVDAEGPL…EGPAGDSMDA (126 aa)) are 13 X 10 AA tandem repeat of G-D-[SNG]-[VIM]-[DEQ]-A-[EAG]-[GDVE]-[PRG]-[LAVP]. Residues 295-306 (EPQQSGDGSLSP) show a composition bias toward polar residues. Composition is skewed to basic and acidic residues over residues 350 to 360 (ARADAGEDRVG) and 371 to 385 (EERR…REEE). Residues serine 397 and serine 442 each carry the phosphoserine modification. Residues 434–446 (GRREDGEASEPRA) are compositionally biased toward basic and acidic residues. The G-site signature appears at 487-490 (CPFS). The helical transmembrane segment at 489-509 (FSQRLFMILWLKGVIFNVTTV) threads the bilayer. In terms of domain architecture, GST C-terminal spans 556-704 (YPKLGTQHPE…AYSDVAKRMK (149 aa)).

It belongs to the chloride channel CLIC family. In terms of assembly, monomer (soluble state). Interacts with dopamine receptors DRD2, DRD3 and DRD4. Post-translationally, phosphorylated. Expressed in brain, placenta, pancreas, liver, lung, heart, kidney, liver, spleen, soleus muscle, and brown fat.

It is found in the cytoplasm. The protein resides in the cell membrane. It catalyses the reaction chloride(in) = chloride(out). With respect to regulation, channel activity is redox- and pH-regulated. Inhibited by IAA-94. In terms of biological role, in the soluble state, catalyzes glutaredoxin-like thiol disulfide exchange reactions with reduced glutathione as electron donor. Can insert into membranes and form voltage-dependent chloride-selective channels. The channel opens upon membrane depolarization at positive voltages and closes at negative membrane voltages. May play a critical role in water-secreting cells, possibly through the regulation of chloride ion transport. The protein is Chloride intracellular channel protein 6 of Homo sapiens (Human).